A 108-amino-acid polypeptide reads, in one-letter code: Thiosulfate sulfurtransferase GlpE (108 aa).

Positions 17–105 (QEKEAVLVDI…WQRQFPAEVA (89 aa)) constitute a Rhodanese domain. Cys65 serves as the catalytic Cysteine persulfide intermediate.

It belongs to the GlpE family.

The protein localises to the cytoplasm. The catalysed reaction is thiosulfate + hydrogen cyanide = thiocyanate + sulfite + 2 H(+). It catalyses the reaction thiosulfate + [thioredoxin]-dithiol = [thioredoxin]-disulfide + hydrogen sulfide + sulfite + 2 H(+). In terms of biological role, transferase that catalyzes the transfer of sulfur from thiosulfate to thiophilic acceptors such as cyanide or dithiols. May function in a CysM-independent thiosulfate assimilation pathway by catalyzing the conversion of thiosulfate to sulfite, which can then be used for L-cysteine biosynthesis. In Escherichia coli O127:H6 (strain E2348/69 / EPEC), this protein is Thiosulfate sulfurtransferase GlpE.